The chain runs to 298 residues: MTIIDGKQVSANLKQELKTAVEACRQKTDAVPGLTVIIVGEDPASQVYVRNKSKSCKEIGMNSTVIELPAETTEAELLAGIEALNNDNDVHGILVQQPLPAHIDDYAVTMAILPSKDVDGFHPENVGQMVLGNLDKCFISCTPYGILELFSRYSIETKGKHCVVIGRSNIVGKPMANLMLQKLKESNCTVTICHSATSNMPEITRQADIVIAAIGRPEYVTEDMIKPGAVVIDVGINRVEDPSRKSGYRLVGDVDYENVNKKASAITPVPGGVGPMTIAMLLKNTLQSFMRVHNIESA.

Residues 166-168 (GRS), S195, and I236 contribute to the NADP(+) site.

The protein belongs to the tetrahydrofolate dehydrogenase/cyclohydrolase family. As to quaternary structure, homodimer.

It carries out the reaction (6R)-5,10-methylene-5,6,7,8-tetrahydrofolate + NADP(+) = (6R)-5,10-methenyltetrahydrofolate + NADPH. It catalyses the reaction (6R)-5,10-methenyltetrahydrofolate + H2O = (6R)-10-formyltetrahydrofolate + H(+). It participates in one-carbon metabolism; tetrahydrofolate interconversion. Functionally, catalyzes the oxidation of 5,10-methylenetetrahydrofolate to 5,10-methenyltetrahydrofolate and then the hydrolysis of 5,10-methenyltetrahydrofolate to 10-formyltetrahydrofolate. This Chlorobium phaeobacteroides (strain BS1) protein is Bifunctional protein FolD.